A 116-amino-acid chain; its full sequence is Flagellar transcriptional regulator FlhD (116 aa).

The protein belongs to the FlhD family. Homodimer; disulfide-linked. Forms a heterohexamer composed of two FlhC and four FlhD subunits. Each FlhC binds a FlhD dimer, forming a heterotrimer, and a hexamer assembles by dimerization of two heterotrimers.

The protein resides in the cytoplasm. Functionally, functions in complex with FlhC as a master transcriptional regulator that regulates transcription of several flagellar and non-flagellar operons by binding to their promoter region. Activates expression of class 2 flagellar genes, including fliA, which is a flagellum-specific sigma factor that turns on the class 3 genes. Also regulates genes whose products function in a variety of physiological pathways. The sequence is that of Flagellar transcriptional regulator FlhD from Serratia proteamaculans (strain 568).